A 279-amino-acid chain; its full sequence is HTH-type transcriptional regulator HdfR (279 aa).

Positions 1-58 constitute an HTH lysR-type domain; the sequence is MDTELLKTFLEVSRTRHFGRAAESLYLTQSAVSFRIRQLENQLGVNLFTRHRNNIRLT. The H-T-H motif DNA-binding region spans 18-37; that stretch reads FGRAAESLYLTQSAVSFRIR.

It belongs to the LysR transcriptional regulatory family.

Negatively regulates the transcription of the flagellar master operon flhDC by binding to the upstream region of the operon. This chain is HTH-type transcriptional regulator HdfR, found in Shigella boydii serotype 18 (strain CDC 3083-94 / BS512).